Consider the following 215-residue polypeptide: Putative lipoprotein NMB1124/NMB1162 (215 aa).

A signal peptide spans 1-16; sequence MKPLILGLAAVLALSA. A lipid anchor (N-palmitoyl cysteine) is attached at C17. C17 is lipidated: S-diacylglycerol cysteine.

The protein localises to the cell membrane. In Neisseria meningitidis serogroup B (strain ATCC BAA-335 / MC58), this protein is Putative lipoprotein NMB1124/NMB1162.